The chain runs to 264 residues: CD320 antigen (264 aa).

A signal peptide spans 1–28 (MARCGAGRAAALGLVLRLLLGLRTGPEA). The LDL-receptor class A 1 domain maps to 50-87 (SCPTDTFKCLTSGYCVPLSWRCDGDRDCSDGSDEEECR). 3 disulfide bridges follow: Cys-51-Cys-64, Cys-58-Cys-77, and Cys-71-Cys-86. The Ca(2+) site is built by Trp-69, Asp-72, Asp-74, Asp-76, Asp-82, and Glu-83. Residue Asn-122 is glycosylated (N-linked (GlcNAc...) asparagine). The region spanning 127-164 (PCQEGELRCILDDVCIPHTWRCDGHPDCPDSSDELSCD) is the LDL-receptor class A 2 domain. Disulfide bonds link Cys-128/Cys-141, Cys-135/Cys-154, and Cys-148/Cys-163. Residues Trp-146, Asp-149, His-151, Asp-153, Asp-159, and Glu-160 each contribute to the Ca(2+) site. An N-linked (GlcNAc...) asparagine glycan is attached at Asn-195. Residues 213 to 233 (VIAAAGVLSAILVSATILILL) traverse the membrane as a helical segment.

As to quaternary structure, interacts (via LDL-receptor class A domains) with TCN2.

The protein localises to the cell membrane. Its function is as follows. Receptor for transcobalamin saturated with cobalamin (TCbl). Plays an important role in cobalamin uptake. Plasma membrane protein that is expressed on follicular dendritic cells (FDC) and mediates interaction with germinal center B cells. Functions as a costimulator to promote B cell responses to antigenic stimuli; promotes B cell differentiation and proliferation. Germinal center-B (GC-B) cells differentiate into memory B-cells and plasma cells (PC) through interaction with T-cells and follicular dendritic cells (FDC). CD320 augments the proliferation of PC precursors generated by IL-10. The chain is CD320 antigen (Cd320) from Rattus norvegicus (Rat).